Reading from the N-terminus, the 70-residue chain is Gene 4.3 protein (70 aa).

The protein is Gene 4.3 protein (4.3) of Escherichia coli (Bacteriophage T3).